Consider the following 494-residue polypeptide: BUB3-interacting and GLEBS motif-containing protein ZNF207 (494 aa).

Positions 1–92 (MGRKKKKQLK…EGIPEKDMDE (92 aa)) are microtubule-binding region. 2 consecutive C2H2-type zinc fingers follow at residues 11–34 (PWCW…KAKH) and 35–58 (FKCH…MQVH). Positions 100–111 (KTQESQKKKQQD) are enriched in basic and acidic residues. 3 disordered regions span residues 100–161 (KTQE…PGIP), 250–377 (NRPP…SATS), and 455–494 (LPGA…GGRY). Positions 112–121 (DSDEYDDDDS) are enriched in acidic residues. Residues 127 to 136 (FQPQPVQPQQ) show a composition bias toward polar residues. Residues 142–161 (MAQPGLPPVPGAPGMPPGIP) are compositionally biased toward pro residues. Low complexity predominate over residues 283–300 (SSSTASSNSESLSASSKA). Polar residues predominate over residues 323–332 (LNSTPATSTE). The segment covering 342-377 (TQSTASTTSTTNSTAAKPAASITSKPATLTTTSATS) has biased composition (low complexity). A GLEBS region spans residues 375–407 (ATSKLIHPDEDISLEERRAQLPKYQRNLPRPGQ). A compositionally biased stretch (pro residues) spans 463 to 483 (GQGPPMVPPYQGGPPRPPMGM).

In terms of assembly, interacts (via GLEBS region) with BUB3.

It localises to the nucleus. It is found in the chromosome. The protein resides in the centromere. Its subcellular location is the kinetochore. The protein localises to the cytoplasm. It localises to the cytoskeleton. It is found in the spindle. Functionally, kinetochore- and microtubule-binding protein that plays a key role in spindle assembly. ZNF207/BuGZ is mainly composed of disordered low-complexity regions and undergoes phase transition or coacervation to form temperature-dependent liquid droplets. Coacervation promotes microtubule bundling and concentrates tubulin, promoting microtubule polymerization and assembly of spindle and spindle matrix by concentrating its building blocks. Also acts as a regulator of mitotic chromosome alignment by mediating the stability and kinetochore loading of BUB3. Mechanisms by which BUB3 is protected are unclear: according to a first report, ZNF207/BuGZ may act by blocking ubiquitination and proteasomal degradation of BUB3. According to another report, the stabilization is independent of the proteasome. This chain is BUB3-interacting and GLEBS motif-containing protein ZNF207, found in Pongo abelii (Sumatran orangutan).